The sequence spans 186 residues: CASP-like protein ARALYDRAFT_316979 (186 aa).

The Cytoplasmic segment spans residues 1 to 23; sequence MRRNGDGEEVVAKRRRRIKELVQ. Residues 24–44 form a helical membrane-spanning segment; it reads VALRGGCLAASATAMAVMLTA. Residues 45 to 70 lie on the Extracellular side of the membrane; the sequence is TEEGVADIYGFKLTLSSNWSFSPSYQ. Asparagine 62 carries N-linked (GlcNAc...) asparagine glycosylation. The helical transmembrane segment at 71 to 91 threads the bilayer; the sequence is YVVGACTGTVLYSLFQLCLGV. The Cytoplasmic segment spans residues 92–115; it reads YRLLTGSPITPSRFQAWLCFTSDQ. A helical membrane pass occupies residues 116–132; the sequence is LFGYLMMSAGSAGSGVT. Topologically, residues 133–161 are extracellular; sequence NLNKTGIRHTPLPDFCKTLSSFCNHVALS. N-linked (GlcNAc...) asparagine glycosylation is present at asparagine 135. Residues 162–182 form a helical membrane-spanning segment; it reads LLLVFLSFIFLASSSFFTVLV. Residues 183–186 are Cytoplasmic-facing; it reads LSTP.

It belongs to the Casparian strip membrane proteins (CASP) family. In terms of assembly, homodimer and heterodimers.

The protein resides in the cell membrane. This Arabidopsis lyrata subsp. lyrata (Lyre-leaved rock-cress) protein is CASP-like protein ARALYDRAFT_316979.